Consider the following 495-residue polypeptide: Histidine--tRNA ligase (495 aa).

Residues 1–10 (MTTDSEQPNT) show a composition bias toward polar residues. The disordered stretch occupies residues 1–24 (MTTDSEQPNTDFRPEARAPRGFAD). Over residues 12–24 (FRPEARAPRGFAD) the composition is skewed to basic and acidic residues.

The protein belongs to the class-II aminoacyl-tRNA synthetase family. As to quaternary structure, homodimer.

The protein resides in the cytoplasm. It carries out the reaction tRNA(His) + L-histidine + ATP = L-histidyl-tRNA(His) + AMP + diphosphate + H(+). The chain is Histidine--tRNA ligase (hisS) from Caulobacter vibrioides (strain ATCC 19089 / CIP 103742 / CB 15) (Caulobacter crescentus).